Here is a 360-residue protein sequence, read N- to C-terminus: uncharacterized protein (360 aa).

The interval 193 to 245 is disordered; the sequence is SRHTRPKGQPLSSPKKNSGSAARPSTAIGLCRRSQTPGALQSTGPSNTELEPE. Polar residues-rich tracts occupy residues 202–212 and 225–241; these read PLSSPKKNSGS and RSQTPGALQSTGPSNTE.

This is an uncharacterized protein from Homo sapiens (Human).